Reading from the N-terminus, the 89-residue chain is Protein WFDC9 (89 aa).

Positions 1 to 23 (MKPWILLLVMFISGVVMLLPVLG) are cleaved as a signal peptide.

It is found in the secreted. The sequence is that of Protein WFDC9 (WFDC9) from Homo sapiens (Human).